The primary structure comprises 376 residues: E3 ubiquitin-protein ligase RNF133 (376 aa).

Residues 65 to 167 (SSTLKRVAGV…LKGTEIFHLI (103 aa)) enclose the PA domain. Residues 190-210 (YLVSFVIVTTATLAYFIFYHI) form a helical membrane-spanning segment. The RING-type; atypical zinc-finger motif lies at 256–297 (CVICFEHYKPNDIVRILTCKHFFHKNCIDPWILSHGTCPICK). Positions 328 to 376 (TLSPSEEETNNEVSPAGTSDKVIHVEENPTSQNNDSQPHSVVEDVHPSP) are disordered. The span at 355–366 (NPTSQNNDSQPH) shows a compositional bias: polar residues.

Interacts with E3 ligase UBE2J1. Post-translationally, auto-ubiquitinated.

The protein localises to the endoplasmic reticulum membrane. The enzyme catalyses S-ubiquitinyl-[E2 ubiquitin-conjugating enzyme]-L-cysteine + [acceptor protein]-L-lysine = [E2 ubiquitin-conjugating enzyme]-L-cysteine + N(6)-ubiquitinyl-[acceptor protein]-L-lysine.. It participates in protein modification; protein ubiquitination. Functionally, has E3 ubiquitin-protein ligase activity. Plays a role in male fecundity through the interaction with the E2 ubituitin-protein ligase UBE2J1. The sequence is that of E3 ubiquitin-protein ligase RNF133 (RNF133) from Macaca fascicularis (Crab-eating macaque).